The chain runs to 244 residues: Ribosomal RNA small subunit methyltransferase NEP1 (244 aa).

The tract at residues 1-34 is disordered; that stretch reads MAAPSDGFKPRERSGGEQAQDWDALPPKRPRLGA. An N-acetylalanine modification is found at Ala-2. 2 positions are modified to phosphoserine: Ser-5 and Ser-14. S-adenosyl-L-methionine is bound by residues Thr-176, Gly-201, Gly-206, and 219–224; that span reads ISNYPL.

This sequence belongs to the class IV-like SAM-binding methyltransferase superfamily. RNA methyltransferase NEP1 family. In terms of assembly, homodimer. Part of the small subunit (SSU) processome, composed of more than 70 proteins and the RNA chaperone small nucleolar RNA (snoRNA) U3.

Its subcellular location is the nucleus. The protein localises to the nucleolus. The catalysed reaction is pseudouridine(1248) in human 18S rRNA + S-adenosyl-L-methionine = N(1)-methylpseudouridine(1248) in human 18S rRNA + S-adenosyl-L-homocysteine + H(+). S-adenosyl-L-methionine-dependent pseudouridine N(1)-methyltransferase that methylates pseudouridine at position 1248 (Psi1248) in 18S rRNA. Involved the biosynthesis of the hypermodified N1-methyl-N3-(3-amino-3-carboxypropyl) pseudouridine (m1acp3-Psi) conserved in eukaryotic 18S rRNA. Is not able to methylate uridine at this position. Also has an essential role in 40S ribosomal subunit biogenesis independent on its methyltransferase activity, facilitating the incorporation of ribosomal protein S19 during the formation of pre-ribosomes. Part of the small subunit (SSU) processome, first precursor of the small eukaryotic ribosomal subunit. During the assembly of the SSU processome in the nucleolus, many ribosome biogenesis factors, an RNA chaperone and ribosomal proteins associate with the nascent pre-rRNA and work in concert to generate RNA folding, modifications, rearrangements and cleavage as well as targeted degradation of pre-ribosomal RNA by the RNA exosome. The protein is Ribosomal RNA small subunit methyltransferase NEP1 of Homo sapiens (Human).